We begin with the raw amino-acid sequence, 668 residues long: Golgin subfamily A member 6-like protein 1 (668 aa).

Disordered regions lie at residues 1-120 (MLMW…HQEA), 323-356 (IREQ…RQEE), 384-466 (EKMH…EMWR), 481-591 (KEKM…REQE), and 603-639 (EQEE…MRRQ). Over residues 15–41 (LPTHPHLPTHPHLPTHPHLPTHPHLPT) the composition is skewed to basic residues. Positions 51–72 (MSKETRQSKLAEAKEQLTDHHP) are enriched in basic and acidic residues. Composition is skewed to polar residues over residues 73-83 (QTNPSVGTAAS) and 91-103 (NNGT…TSGG). Residues 106 to 120 (SPEDEQKASHQHQEA) show a composition bias toward basic and acidic residues. Residues 177-663 (LEQALSAVAT…EEKMQEHQEH (487 aa)) adopt a coiled-coil conformation.

Belongs to the GOLGA6 family.

The chain is Golgin subfamily A member 6-like protein 1 (GOLGA6L1) from Homo sapiens (Human).